Here is a 687-residue protein sequence, read N- to C-terminus: Putative pentatricopeptide repeat-containing protein At3g15930 (687 aa).

13 PPR repeats span residues 98–132 (DVVV…GVTP), 133–168 (DSHT…GLGS), 169–199 (NLYV…RCKE), 200–234 (DVFS…LVSP), 235–269 (TSVT…KTEP), 270–304 (SLRL…DVIS), 305–331 (WTSI…MPVR), 332–366 (DRIS…GMIP), 367–401 (DEFT…KIKN), 402–432 (DVVV…MDQR), 433–467 (DKFT…SIQP), 468–498 (DDIT…MRSD), and 504–534 (SLVH…MPMN). The interval 539–614 (VWGALLGASR…TPGFSLIEVN (76 aa)) is type E motif. Residues 615 to 645 (GFAHEFVAGDKSHLQSEEIYMKLEELAQEST) form a type E(+) motif region.

Belongs to the PPR family. PCMP-E subfamily.

In Arabidopsis thaliana (Mouse-ear cress), this protein is Putative pentatricopeptide repeat-containing protein At3g15930 (PCMP-E51).